We begin with the raw amino-acid sequence, 302 residues long: Large ribosomal subunit protein bL28m (302 aa).

It belongs to the bacterial ribosomal protein bL28 family. Component of the mitochondrial ribosome large subunit (39S) which comprises a 16S rRNA and about 50 distinct proteins.

It is found in the mitochondrion. The sequence is that of Large ribosomal subunit protein bL28m (mRpL28) from Drosophila melanogaster (Fruit fly).